Here is a 906-residue protein sequence, read N- to C-terminus: MTELAELDRFTAELPFSLDDFQQRACSALERGHGVLVCAPTGAGKTVVGEFAVHLALAAGSKCFYTTPLKALSNQKHTDLTARYGRDQIGLLTGDLSVNGNAPVVVMTTEVLRNMLYADSPALQGLSYVVMDEVHFLADRMRGPVWEEVILQLPDDVRVVSLSATVSNAEEFGGWIQTVRGDTTVVVDEHRPVPLWQHVLVGKRMFDLFDYRIGEAEGQPQVNRELLRHIAHRREADRMADWQPRRRGSGRPGFYRPPGRPEVIAKLDAEGLLPAITFVFSRAGCDAAVTQCLRSPLRLTSEEERARIAEVIDHRCGDLADSDLAVLGYYEWREGLLRGLAAHHAGMLPAFRHTVEELFTAGLVKAVFATETLALGINMPARTVVLERLVKFNGEQHMPLTPGEYTQLTGRAGRRGIDVEGHAVVIWHPEIEPSEVAGLASTRTFPLRSSFAPSYNMTINLVHRMGPQQAHRLLEQSFAQYQADRSVVGLVRGIERGNRILGEIAAELGGSDAPILEYARLRARVSELERAQARASRLQRRQAATDALAALRRGDIITITHGRRGGLAVVLESARDRDDPRPLVLTEHRWAGRISSADYSGTTPVGSMTLPKRVEHRQPRVRRDLASALRSAAAGLVIPAARRVSEAGGFHDPELESSREQLRRHPVHTSPGLEDQIRQAERYLRIERDNAQLERKVAAATNSLARTFDRFVGLLTEREFIDGPATDPVVTDDGRLLARIYSESDLLVAECLRTGAWEGLKPAELAGVVSAVVYETRGGDGQGAPFGADVPTPRLRQALTQTSRLSTTLRADEQAHRITPSREPDDGFVRVIYRWSRTGDLAAALAAADVNGSGSPLLAGDFVRWCRQVLDLLDQVRNAAPNPELRATAKRAIGDIRRGVVAVDAG.

The region spanning 26–184 is the Helicase ATP-binding domain; the sequence is CSALERGHGV…WIQTVRGDTT (159 aa). 39-46 contacts ATP; the sequence is APTGAGKT. Residues 132–135 carry the DEVH box motif; sequence DEVH. In terms of domain architecture, Helicase C-terminal spans 259 to 463; it reads GRPEVIAKLD…SYNMTINLVH (205 aa).

Belongs to the helicase family. SKI2 subfamily.

This Mycobacterium tuberculosis (strain CDC 1551 / Oshkosh) protein is Probable helicase HelY (helY).